Reading from the N-terminus, the 2896-residue chain is Hemocyanin G-type, units Oda to Odg (2896 aa).

The tract at residues 1 to 419 (NLIRKDVDAL…ADMVVVDKTG (419 aa)) is functional unit Oda. H41 serves as a coordination point for Cu cation. C47 and C57 are oxidised to a cystine. Positions 58–60 (CLH) form a cross-link, 2'-(S-cysteinyl)-histidine (Cys-His). 5 residues coordinate Cu cation: H60, H69, H178, H182, and H209. Disulfide bonds link C168-C234 and C321-C333. An N-linked (GlcNAc...) asparagine glycan is attached at N386. The interval 420–834 (LNVRKDLQSL…KESGVVFDEL (415 aa)) is functional unit Odb. H460 contributes to the Cu cation binding site. A disulfide bridge links C466 with C477. Residues 478–480 (CVH) constitute a cross-link (2'-(S-cysteinyl)-histidine (Cys-His)). The Cu cation site is built by H480, H489, H601, H605, and H632. A disulfide bridge connects residues C591 and C657. The N-linked (GlcNAc...) asparagine glycan is linked to N804. The interval 835-1254 (YRSRRDVSSL…GIWVEPVTSA (420 aa)) is functional unit Odc. Residue H875 participates in Cu cation binding. A disulfide bond links C881 and C892. Positions 893 to 895 (CHH) form a cross-link, 2'-(S-cysteinyl)-histidine (Cys-His). Residues H895, H904, H1013, H1017, H1044, and H1292 each contribute to the Cu cation site. C1003 and C1070 form a disulfide bridge. Residues 1255-1667 (NRIRKNLNAL…ADIKSEEGNE (413 aa)) are functional unit Odd. A disulfide bridge connects residues C1298 and C1309. Positions 1310–1312 (CIH) form a cross-link, 2'-(S-cysteinyl)-histidine (Cys-His). Residues H1312, H1321, H1425, H1429, and H1456 each coordinate Cu cation. Residues C1415 and C1482 are joined by a disulfide bond. The N-linked (GlcNAc...) asparagine glycan is linked to N1496. The cysteines at positions 1571 and 1581 are disulfide-linked. Residue N1634 is glycosylated (N-linked (GlcNAc...) asparagine). The tract at residues 1668-2085 (YLVRKNVERL…NEDADIDTPL (418 aa)) is functional unit Ode. H1708 provides a ligand contact to Cu cation. The cysteines at positions 1714 and 1725 are disulfide-linked. The segment at residues 1726-1728 (CLH) is a cross-link (2'-(S-cysteinyl)-histidine (Cys-His)). H1728, H1737, H1849, H1853, and H1880 together coordinate Cu cation. Disulfide bonds link C1839/C1906 and C1997/C2003. N2055 is a glycosylation site (N-linked (GlcNAc...) asparagine). Positions 2086–2502 (NHIRRNVESL…REVHKKTVGD (417 aa)) are functional unit Odf. A Cu cation-binding site is contributed by H2126. C2131 and C2141 form a disulfide bridge. The segment at residues 2142–2144 (CLH) is a cross-link (2'-(S-cysteinyl)-histidine (Cys-His)). Residues H2144 and H2153 each contribute to the Cu cation site. A glycan (N-linked (GlcNAc...) asparagine) is linked at N2201. 2 disulfides stabilise this stretch: C2252–C2319 and C2406–C2411. Residues H2262, H2266, and H2293 each coordinate Cu cation. A functional unit Odg region spans residues 2503-2896 (AIIRKNVNSL…VFLAPAKTTH (394 aa)). H2543 is a Cu cation binding site. Cysteines 2549 and 2559 form a disulfide. N-linked (GlcNAc...) asparagine glycosylation occurs at N2553. Residues 2560–2562 (CQH) constitute a cross-link (2'-(S-cysteinyl)-histidine (Cys-His)). Cu cation is bound by residues H2562, H2571, H2671, H2675, and H2702. Disulfide bonds link C2661–C2728 and C2815–C2821.

Belongs to the tyrosinase family. Hemocyanin subfamily. In terms of assembly, decamers of large identical subunits (350 kDa), each containing 7 globular oxygen-binding functional units: ODA, ODB, ODC, ODD, ODE, ODF, and ODG. Decamer formation requires the presence of magnesium ions. The cofactor is Cu(2+).

Its function is as follows. Hemocyanins are copper-containing oxygen carriers occurring freely dissolved in the hemolymph of many mollusks and arthropods. In Enteroctopus dofleini (North Pacific giant octopus), this protein is Hemocyanin G-type, units Oda to Odg (ODHCY).